The primary structure comprises 337 residues: Cytoskeleton protein RodZ (337 aa).

Residues 1–111 (MNTEATHDQN…LGKRRKKRDG (111 aa)) lie on the Cytoplasmic side of the membrane. The HTH cro/C1-type domain occupies 19 to 71 (LRNAREQLGLSQQAVAERLCLKVSTVRDIEEDKAPADLASTFLRGYIRSYARL). Positions 30–49 (QQAVAERLCLKVSTVRDIEE) form a DNA-binding region, H-T-H motif. Residues 112–132 (WLMTFTWLVLFVVIGLSGAWW) form a helical; Signal-anchor for type II membrane protein membrane-spanning segment. The Periplasmic segment spans residues 133 to 337 (WQDHKAQQEE…TLNAEQSPAQ (205 aa)). Polar residues predominate over residues 145 to 167 (TMADQSSAELSSNSEQGQSVPLN). Residues 145–237 (TMADQSSAEL…ATTTPDGAAP (93 aa)) are disordered. The span at 168–207 (TSTTTDPATTSTPPASVDTTATNTQTPAVTAPAPAVDPQQ) shows a compositional bias: low complexity. The span at 208–218 (NAVVSPSQANV) shows a compositional bias: polar residues. Over residues 219 to 237 (DTAATPAPTATTTPDGAAP) the composition is skewed to low complexity.

This sequence belongs to the RodZ family.

Its subcellular location is the cell inner membrane. Cytoskeletal protein that is involved in cell-shape control through regulation of the length of the long axis. This is Cytoskeleton protein RodZ from Escherichia coli (strain 55989 / EAEC).